We begin with the raw amino-acid sequence, 135 residues long: MKPSERRKARRLAVQAIYSWQLSGNNIADVEHEFLTEQDVAGVDIAYFRELLGGVATKKSQLDELITPFVTRPLDEVDPVEKAIVRIATYELTFRKDVPYKVAINEAIELAKAFGAEDGHKFVNGILDKLVARNK.

It belongs to the NusB family.

In terms of biological role, involved in transcription antitermination. Required for transcription of ribosomal RNA (rRNA) genes. Binds specifically to the boxA antiterminator sequence of the ribosomal RNA (rrn) operons. This chain is Transcription antitermination protein NusB, found in Shewanella pealeana (strain ATCC 700345 / ANG-SQ1).